Consider the following 355-residue polypeptide: NAD-dependent protein deacylase sirtuin-6 (355 aa).

At serine 2 the chain carries N-acetylserine. Position 10 is a phosphoserine (serine 10). The Deacetylase sirtuin-type domain occupies 27-272 (PEELERKVWE…TRLMKHLGLE (246 aa)). N6-acetyllysine is present on lysine 33. NAD(+)-binding residues include alanine 53, threonine 57, phenylalanine 64, arginine 65, tryptophan 71, glutamine 113, and histidine 133. Histidine 133 acts as the Proton acceptor in catalysis. Zn(2+)-binding residues include cysteine 141, cysteine 144, and cysteine 166. Residue lysine 170 forms a Glycyl lysine isopeptide (Lys-Gly) (interchain with G-Cter in ubiquitin) linkage. Cysteine 177 serves as a coordination point for Zn(2+). Residues glycine 214, serine 216, asparagine 240, glutamine 242, and valine 258 each coordinate NAD(+). Residues 284 to 355 (RALPPLPRPP…KRVKAEAVPS (72 aa)) are disordered. A compositionally biased stretch (pro residues) spans 287–296 (PPLPRPPTPK). Position 294 is a phosphothreonine (threonine 294). Phosphoserine is present on residues serine 303 and serine 330.

It belongs to the sirtuin family. Class IV subfamily. In terms of assembly, homodimer; binds to nucleosomes and DNA ends as a homodimer. Interacts with RELA; interferes with RELA binding to target DNA. Interacts with SMARCA5; promoting recruitment of SMARCA5/SNF2H to double-strand breaks (DSBs) sites. Interacts with the mTORC2 complex; preventing the ability of SIRT6 to deacetylate FOXO1. Interacts with the CLOCK-BMAL1 complex; recruited by the CLOCK-BMAL1 complex to regulate expression of clock-controlled genes. Interacts with CSNK2A2; preventing CSNK2A2 localization to the nucleus. Acetylated at Lys-33. Deacetylation at Lys-33 by SIRT1 promotes homomultimerization and binding to double-strand breaks (DSBs) sites. Post-translationally, phosphorylation at Ser-10 by MAPK8/JNK1 in response to oxidative stress stimulates the mono-ADP-ribosyltransferase activity on PARP1, leading to PARP1 recruitment to double-strand breaks (DSBs). In terms of processing, monoubiquitinated at Lys-170 by STUB1/CHIP, preventing its degradation by the proteasome. Sumoylated, leading to specifically decrease ability to deacetylate histone H3 at 'Lys-56' (H3K56ac).

The protein resides in the nucleus. Its subcellular location is the chromosome. The protein localises to the telomere. It localises to the endoplasmic reticulum. The enzyme catalyses N(6)-acetyl-L-lysyl-[protein] + NAD(+) + H2O = 2''-O-acetyl-ADP-D-ribose + nicotinamide + L-lysyl-[protein]. It catalyses the reaction N(6)-tetradecanoyl-L-lysyl-[protein] + NAD(+) + H2O = 2''-O-tetradecanoyl-ADP-D-ribose + nicotinamide + L-lysyl-[protein]. The catalysed reaction is N(6)-hexadecanoyl-L-lysyl-[protein] + NAD(+) + H2O = 2''-O-hexadecanoyl-ADP-D-ribose + nicotinamide + L-lysyl-[protein]. It carries out the reaction L-lysyl-[protein] + NAD(+) = N(6)-(ADP-D-ribosyl)-L-lysyl-[protein] + nicotinamide + H(+). The enzyme catalyses L-arginyl-[protein] + NAD(+) = N(omega)-(ADP-D-ribosyl)-L-arginyl-[protein] + nicotinamide + H(+). Compared to the defatty-acylase activity, the protein deacetylase activity is weak in vitro, and requires activation. The histone deacetylase activity is strongly activated upon binding to nucleosomes and chromatin in vivo. Two molecules of SIRT6 associate with the acidic patch of one nucleosome, while the C-terminal disordered region of SIRT6 associates with nucleosomal DNA, leading to efficient histone deacetylation. The protein-lysine deacetylase activity is also activated by long-chain free fatty-acids. In terms of biological role, NAD-dependent protein deacetylase, deacylase and mono-ADP-ribosyltransferase that plays an essential role in DNA damage repair, telomere maintenance, metabolic homeostasis, inflammation, tumorigenesis and aging. Displays protein-lysine deacetylase or defatty-acylase (demyristoylase and depalmitoylase) activity, depending on the context. Acts as a key histone deacetylase by catalyzing deacetylation of histone H3 at 'Lys-9', 'Lys-18' and 'Lys-56' (H3K9ac, H3K18ac and H3K56ac, respectively), suppressing target gene expression of several transcription factors, including NF-kappa-B. Acts as an inhibitor of transcription elongation by mediating deacetylation of H3K9ac and H3K56ac, preventing release of NELFE from chromatin and causing transcriptional pausing. Involved in DNA repair by promoting double-strand break (DSB) repair: acts as a DSB sensor by recognizing and binding DSB sites, leading to (1) recruitment of DNA repair proteins, such as SMARCA5/SNF2H, and (2) deacetylation of histone H3K9ac and H3K56ac. SIRT6 participation to DSB repair is probably involved in extension of life span. Also promotes DNA repair by deacetylating non-histone proteins, such as DDB2 and p53/TP53. Specifically deacetylates H3K18ac at pericentric heterochromatin, thereby maintaining pericentric heterochromatin silencing at centromeres and protecting against genomic instability and cellular senescence. Involved in telomere maintenance by catalyzing deacetylation of histone H3 in telomeric chromatin, regulating telomere position effect and telomere movement in response to DNA damage. Required for embryonic stem cell differentiation by mediating histone deacetylation of H3K9ac. Plays a major role in metabolism by regulating processes such as glycolysis, gluconeogenesis, insulin secretion and lipid metabolism. Inhibits glycolysis via histone deacetylase activity and by acting as a corepressor of the transcription factor HIF1A, thereby controlling the expression of multiple glycolytic genes. Has tumor suppressor activity by repressing glycolysis, thereby inhibiting the Warburg effect. Also regulates glycolysis and tumorigenesis by mediating deacetylation and nuclear export of non-histone proteins, such as isoform M2 of PKM (PKM2). Acts as a negative regulator of gluconeogenesis by mediating deacetylation of non-histone proteins, such as FOXO1 and KAT2A/GCN5. Promotes beta-oxidation of fatty acids during fasting by catalyzing deacetylation of NCOA2, inducing coactivation of PPARA. Acts as a regulator of lipid catabolism in brown adipocytes, both by catalyzing deacetylation of histones and non-histone proteins, such as FOXO1. Also acts as a regulator of circadian rhythms, both by regulating expression of clock-controlled genes involved in lipid and carbohydrate metabolism, and by catalyzing deacetylation of PER2. The defatty-acylase activity is specifically involved in regulation of protein secretion. Has high activity toward long-chain fatty acyl groups and mediates protein-lysine demyristoylation and depalmitoylation of target proteins, such as RRAS2 and TNF, thereby regulating their secretion. Also acts as a mono-ADP-ribosyltransferase by mediating mono-ADP-ribosylation of PARP1, TRIM28/KAP1 or SMARCC2/BAF170. Mono-ADP-ribosyltransferase activity is involved in DNA repair, cellular senescence, repression of LINE-1 retrotransposon elements and regulation of transcription. This chain is NAD-dependent protein deacylase sirtuin-6, found in Macaca fascicularis (Crab-eating macaque).